Here is a 312-residue protein sequence, read N- to C-terminus: Pantothenate kinase (312 aa).

92–99 (GSVAVGKS) lines the ATP pocket.

It belongs to the prokaryotic pantothenate kinase family.

The protein resides in the cytoplasm. It catalyses the reaction (R)-pantothenate + ATP = (R)-4'-phosphopantothenate + ADP + H(+). The protein operates within cofactor biosynthesis; coenzyme A biosynthesis; CoA from (R)-pantothenate: step 1/5. This chain is Pantothenate kinase (coaA), found in Vibrio cholerae serotype O1 (strain ATCC 39315 / El Tor Inaba N16961).